Here is a 485-residue protein sequence, read N- to C-terminus: Peptidyl-prolyl cis-trans isomerase-like 4 (485 aa).

Residues 1-172 enclose the PPIase cyclophilin-type domain; that stretch reads MSVLLETSAG…IDIRIKHTVI (172 aa). An RRM domain is found at 251–329; the sequence is NVLFVCKLNP…RRIHVDFSQS (79 aa). Residues 377–485 are disordered; that stretch reads NYRMVYGEEE…RDENDRRSRR (109 aa). Basic and acidic residues predominate over residues 426–485; it reads RPRDRSRDRYHKPRDDRRGDRRDRDRRDQDRNRYRDRDHRDRGREKDRYGRDENDRRSRR.

It belongs to the cyclophilin-type PPIase family. PPIL4 subfamily.

The protein resides in the nucleus. The enzyme catalyses [protein]-peptidylproline (omega=180) = [protein]-peptidylproline (omega=0). PPIases accelerate the folding of proteins. It catalyzes the cis-trans isomerization of proline imidic peptide bonds in oligopeptides. This is Peptidyl-prolyl cis-trans isomerase-like 4 (CYP6) from Gibberella zeae (strain ATCC MYA-4620 / CBS 123657 / FGSC 9075 / NRRL 31084 / PH-1) (Wheat head blight fungus).